The following is a 372-amino-acid chain: NAD(P)H-quinone oxidoreductase subunit 1 (372 aa).

8 consecutive transmembrane segments (helical) span residues 29–49, 97–117, 128–148, 176–196, 204–224, 254–274, 308–328, and 351–371; these read WLPFPMLLMIVVATVGVLVTV, LLFTLGPVIVAVPVFLSYLVV, LGVAIFLWIALSSIQPIGLLM, LALAVLAVAMMSNSLSTIDIV, ILGWNIWRQPLGFIIFWIAVL, FALYYLASYVNLVLSSLLVAV, TLGIIMTLLKTYLLVFIAVLL, and VALVNLLLTAALKLTFPFAFG.

The protein belongs to the complex I subunit 1 family. In terms of assembly, NDH-1 is composed of at least 11 different subunits.

It localises to the cellular thylakoid membrane. It catalyses the reaction a plastoquinone + NADH + (n+1) H(+)(in) = a plastoquinol + NAD(+) + n H(+)(out). The catalysed reaction is a plastoquinone + NADPH + (n+1) H(+)(in) = a plastoquinol + NADP(+) + n H(+)(out). In terms of biological role, NDH-1 shuttles electrons from an unknown electron donor, via FMN and iron-sulfur (Fe-S) centers, to quinones in the respiratory and/or the photosynthetic chain. The immediate electron acceptor for the enzyme in this species is believed to be plastoquinone. Couples the redox reaction to proton translocation, and thus conserves the redox energy in a proton gradient. The chain is NAD(P)H-quinone oxidoreductase subunit 1 from Trichodesmium erythraeum (strain IMS101).